Reading from the N-terminus, the 422-residue chain is Keratin, type I cytoskeletal 23 (422 aa).

The span at 1–13 shows a compositional bias: polar residues; that stretch reads MNSGHSFSQTPSA. The interval 1-71 is head; the sequence is MNSGHSFSQT…GRSSPLLGGN (71 aa). Positions 1–73 are disordered; sequence MNSGHSFSQT…SSPLLGGNGK (73 aa). Residues 72 to 107 form a coil 1A region; it reads GKATMQNLNDRLASYLEKVRALEEANMKLESRILKW. Residues 72 to 382 enclose the IF rod domain; sequence GKATMQNLND…RLLEGESEGT (311 aa). Positions 108-125 are linker 1; sequence HQQRDPGSKKDYSQYEEN. The coil 1B stretch occupies residues 126 to 217; sequence ITHLQEQIVD…KHHEQEMEKH (92 aa). The linker 12 stretch occupies residues 218 to 240; sequence HVPSDFNVNVKVDTGPREDLIKV. The coil 2 stretch occupies residues 241-378; sequence LEDMRQEYEL…TTYRRLLEGE (138 aa). Residues 379 to 422 form a rod-like helical tail region; that stretch reads SEGTREESKSSMKVSATPKIKAITQETINGRLVLCQVNEIQKHA.

The protein belongs to the intermediate filament family. As to quaternary structure, heterotetramer of two type I and two type II keratins.

This is Keratin, type I cytoskeletal 23 (KRT23) from Homo sapiens (Human).